The following is a 1203-amino-acid chain: MPRVVLNGVTVDFPFQPYPCQQEYMTKVLECLQKKVNGILESPTGTGKTLCLLCSTLAWQQHLRDAVSSLKIAERVQGELFASRTLSSWGSAAAASGDSIECYTDIPKIIYASRTHSQLTQVIRELRNTAYRPKVCVLGSREQLCIHPEVKKQESNHMQISLCRKKVASRSCHFYNNVEAKFLEQDLATPILDIEDLVKNGSKQKMCPYYLSRNMKQQADIIFMPYNYLLDAKSRKAHSIDLKGTVVIFDEAHNVEKICEESASFDLTPRDVASGLEIINQVLEEQARVTQQGELQQEFIVDTSSSGLNMELEDIAKLKMILLRLEEAIDAVQLPGDDRGVTKPGSYIFELFAEAQITFQTKGCILESLDQIIQHLAGRTGVFTNTAGLQKLMDIIQIVFSVDPPEGSPGSLVGLGISHSYKVHIHPETSHRRAAKRSDAWSTTASRKQGKVLSYWCFSPSQSMRELVCQGVRTLILTSGTLAPLSSFALEMQIPFPVCLENPHIIDKNQLWVGIVPRGPDGVQLSSAYDKRFSEECLSSLGKALSNIARVVPHGLLVFFPSYPVMEKSLEFWQVQGLARKVEALKPLFVEPRNKGSFSEVIDAYYQQVASPASNGATFLAVCRGKASEGLDFSDMNGRGVIVTGLPYPPRMDPRVVLKMQFLDEMRGRSGVGGQCLSGQEWYQQQASRAVNQAIGRVIRHRHDYGAIFLCDHRFAYADARAQLPSWVRPYLKVYDNFGHVIRDVAQFFRVAQKTMPLPVPQAVTSSVSEGEIALKDATLSSYSLSTRKAMSLDVHVPSLRQKPIGLPAAGDSESSLCGEYEQQTFSAQQRPMGLLAALEYNEQKAGASEEQALGSSTPSLRCEKRLSTEQKGGRKKVRLVNHPEEPMAGTQAGRAKMFMVAVKQALSQANFDTFTQALQHYKSSDDFEALVASLTCLFAEDPKKHTLLKGFYQFVRPHHKQQFEDICFQLTGQRCGYQPGKRELESKLTLSEGVDRQLDPGQHLNQGQPHLSAHPTSKGHTSHCTKVGCAVEKPGQPAVSDYLSDVHKALGSASCNQLTAALRAYKQDDDLDKVVAVVAALTTAKPEHLPLLQRFGMFVRRHHKPQFLQTCADLMGLPTTGKDLELEGPRDESPTVPPELTHEDLKPGPSMSKKPEKTQSKISSFFRQRPDESVRSDDTTPKPMQLPPRLPHELMKPHRSKQ.

The 290-residue stretch at 7 to 296 (NGVTVDFPFQ…ARVTQQGELQ (290 aa)) folds into the Helicase ATP-binding domain. 42–49 (SPTGTGKT) contributes to the ATP binding site. Residues cysteine 145, cysteine 163, cysteine 172, and cysteine 207 each contribute to the [4Fe-4S] cluster site. The Nuclear localization signal signature appears at 151–167 (KKQESNHMQISLCRKKV). The short motif at 250–253 (DEAH) is the DEAH box element. A Nuclear localization signal motif is present at residues 871 to 877 (QKGGRKK). 2 disordered regions span residues 998 to 1020 (QLDP…TSKG) and 1120 to 1203 (TTGK…RSKQ). Polar residues predominate over residues 1004-1020 (HLNQGQPHLSAHPTSKG). Positions 1123–1134 (KDLELEGPRDES) are enriched in basic and acidic residues. The PIP-box signature appears at 1160–1167 (QSKISSFF). The span at 1169–1181 (QRPDESVRSDDTT) shows a compositional bias: basic and acidic residues.

This sequence belongs to the helicase family. RAD3/XPD subfamily. Interacts with TERF1. Interacts (via PIP-box) with PCNA; the interaction is direct and essential for suppressing telomere fragility. Interacts with MMS19; the interaction mediates the association of RTEL1 with the cytosolic iron-sulfur protein assembly (CIA) complex. Widely expressed. Expressed in spleen, thymus, Peyer patches, kidney, and intestine. Not expressed in brain, heart, lung, skeletal muscles, skin and white fat. In the adult gonad, it is highly expressed in the testis, mainly in the spermatogonia and meiotic spermatocytes.

It localises to the nucleus. It carries out the reaction ATP + H2O = ADP + phosphate + H(+). Its function is as follows. A probable ATP-dependent DNA helicase implicated in telomere-length regulation, DNA repair and the maintenance of genomic stability. Acts as an anti-recombinase to counteract toxic recombination and limit crossover during meiosis. Regulates meiotic recombination and crossover homeostasis by physically dissociating strand invasion events and thereby promotes noncrossover repair by meiotic synthesis dependent strand annealing (SDSA) as well as disassembly of D loop recombination intermediates. Also disassembles T loops and prevents telomere fragility by counteracting telomeric G4-DNA structures, which together ensure the dynamics and stability of the telomere. The protein is Regulator of telomere elongation helicase 1 of Mus musculus (Mouse).